Reading from the N-terminus, the 380-residue chain is Guanine nucleotide-binding protein subunit beta (380 aa).

WD repeat units lie at residues 64 to 94, 106 to 136, 155 to 186, 203 to 234, 247 to 277, 296 to 326, and 342 to 372; these read GHSG…IVWN, LHCP…SIFN, GHKG…VLWD, GHTA…RLWD, GHED…RLFD, NELP…YVWD, and SHDG…KIWA.

The protein belongs to the WD repeat G protein beta family. In terms of assembly, g proteins are composed of 3 units, alpha, beta and gamma. In terms of tissue distribution, present in the root, leaf and tassel.

Guanine nucleotide-binding proteins (G proteins) are involved as a modulator or transducer in various transmembrane signaling systems. The beta and gamma chains are required for the GTPase activity, for replacement of GDP by GTP, and for G protein-effector interaction. The polypeptide is Guanine nucleotide-binding protein subunit beta (GB1) (Zea mays (Maize)).